The chain runs to 246 residues: UDP-N-acetyl-D-mannosaminuronic acid transferase (246 aa).

It belongs to the glycosyltransferase 26 family.

It carries out the reaction UDP-N-acetyl-alpha-D-mannosaminouronate + N-acetyl-alpha-D-glucosaminyl-di-trans,octa-cis-undecaprenyl diphosphate = beta-D-ManNAcA-(1-&gt;4)-alpha-D-GlcNAc-di-trans,octa-cis-undecaprenyl diphosphate + UDP + H(+). It functions in the pathway bacterial outer membrane biogenesis; enterobacterial common antigen biosynthesis. Functionally, catalyzes the synthesis of Und-PP-GlcNAc-ManNAcA (Lipid II), the second lipid-linked intermediate involved in enterobacterial common antigen (ECA) synthesis. This is UDP-N-acetyl-D-mannosaminuronic acid transferase from Salmonella dublin (strain CT_02021853).